We begin with the raw amino-acid sequence, 179 residues long: Large ribosomal subunit protein uL6 (179 aa).

It belongs to the universal ribosomal protein uL6 family. As to quaternary structure, part of the 50S ribosomal subunit.

This protein binds to the 23S rRNA, and is important in its secondary structure. It is located near the subunit interface in the base of the L7/L12 stalk, and near the tRNA binding site of the peptidyltransferase center. The polypeptide is Large ribosomal subunit protein uL6 (Spiroplasma citri).